The chain runs to 156 residues: Large ribosomal subunit protein uL22 (156 aa).

This sequence belongs to the universal ribosomal protein uL22 family. As to quaternary structure, part of the 50S ribosomal subunit.

In terms of biological role, this protein binds specifically to 23S rRNA. It makes multiple contacts with different domains of the 23S rRNA in the assembled 50S subunit and ribosome. Its function is as follows. The globular domain of the protein is located near the polypeptide exit tunnel on the outside of the subunit, while an extended beta-hairpin is found that lines the wall of the exit tunnel in the center of the 70S ribosome. The protein is Large ribosomal subunit protein uL22 of Sulfurisphaera tokodaii (strain DSM 16993 / JCM 10545 / NBRC 100140 / 7) (Sulfolobus tokodaii).